A 429-amino-acid chain; its full sequence is Adenylosuccinate synthetase (429 aa).

GTP is bound by residues 12–18 (GDEGKGK) and 40–42 (GHT). D13 acts as the Proton acceptor in catalysis. Mg(2+) contacts are provided by D13 and G40. IMP-binding positions include 13 to 16 (DEGK), 38 to 41 (NAGH), T128, R142, Q223, T238, and R302. H41 acts as the Proton donor in catalysis. Residue 298-304 (VNTGRKR) participates in substrate binding. Residues R304, 330–332 (KLD), and 412–414 (GVG) contribute to the GTP site.

It belongs to the adenylosuccinate synthetase family. In terms of assembly, homodimer. Requires Mg(2+) as cofactor.

The protein resides in the cytoplasm. It catalyses the reaction IMP + L-aspartate + GTP = N(6)-(1,2-dicarboxyethyl)-AMP + GDP + phosphate + 2 H(+). The protein operates within purine metabolism; AMP biosynthesis via de novo pathway; AMP from IMP: step 1/2. Its function is as follows. Plays an important role in the de novo pathway of purine nucleotide biosynthesis. Catalyzes the first committed step in the biosynthesis of AMP from IMP. The chain is Adenylosuccinate synthetase from Corynebacterium diphtheriae (strain ATCC 700971 / NCTC 13129 / Biotype gravis).